A 744-amino-acid chain; its full sequence is Tripartite motif-containing protein 3 (744 aa).

Alanine 2 bears the N-acetylalanine mark. The segment at 2 to 290 (AKREDSPGPE…LAAQAFPERP (289 aa)) is interaction with KIF21B. The residue at position 7 (serine 7) is a Phosphoserine. The segment at 22–63 (CSICLDRYRCPKVLPCLHTFCERCLQNYIPPQSLTLSCPVCR) adopts an RING-type zinc-finger fold. A B box-type zinc finger spans residues 110–151 (GRPLSCPNHEGKTMEFYCEACETAMCGECRAGEHREHGTVLL). Zn(2+)-binding residues include cysteine 115, histidine 118, cysteine 138, and histidine 143. A coiled-coil region spans residues 153-224 (DVVEQHKAAL…RKQALVSDLE (72 aa)). A Filamin repeat occupies 317 to 418 (TTSAAAHETV…VRGSPFRVRA (102 aa)). A disordered region spans residues 420-462 (RPGDLPPSPDDVKRRVKSPGGPGSHVRQKAVRRPSSMYSTGGK). The residue at position 427 (serine 427) is a Phosphoserine. NHL repeat units follow at residues 473–516 (VFRV…FSNE), 520–563 (KFRF…FSPE), 564–605 (GKFK…FQPN), 609–652 (VGRF…YSAD), 656–699 (LFKF…FDSS), and 700–743 (GSFL…YRYL).

It belongs to the TRIM/RBCC family. In terms of assembly, forms homooligomers. Interacts with TRIM2; this interaction reduces TRIM2 activity. Associates with myosin-Vb (MYO5B) and alpha-actinin-4 (ACTN4). Component of the CART complex, at least composed of ACTN4, HGS/HRS, MYO5B and TRIM3. Interacts with ZFYVE28/LST2. Interacts with KIF21B. As to expression, highly expressed in the brain, moderate levels in the lung, very low levels in the liver, kidney and heart. In the brain, expression was highest in the cerebellum. Expression in the brain is found at low levels at embryonic day 15 and then increases during the first two postnatal weeks before decreasing through adulthood.

It localises to the cytoplasm. Its subcellular location is the early endosome. The protein localises to the golgi apparatus. The protein resides in the trans-Golgi network. It is found in the cell projection. It localises to the dendrite. The catalysed reaction is S-ubiquitinyl-[E2 ubiquitin-conjugating enzyme]-L-cysteine + [acceptor protein]-L-lysine = [E2 ubiquitin-conjugating enzyme]-L-cysteine + N(6)-ubiquitinyl-[acceptor protein]-L-lysine.. In terms of biological role, E3 ubiquitin ligase that plays essential roles in neuronal functions such as regulation of neuronal plasticity, learning, and memory. In addition to its neuronal functions, participates in other biological processes such as innate immunity or cell cycle regulation. Component of the cytoskeleton-associated recycling or transport complex in neurons, polyubiquitinates gamma-actin, thus regulating neuronal plasticity, learning, and memory. Ubiquitinates postsynaptic scaffold GKAP, a neuronal substrate involved in synaptic remodeling and thereby modulates dendritic spine morphology. Positively regulates motility of microtubule-dependent motor protein KIF21B. Induces growth arrest via its RING-dependent E3 ligase activity and ubiquinates CDKN1A. Positively regulates TLR3-mediated signaling by mediating 'Lys-63'-linked polyubiquitination of TLR3. In turn, promotes the recognition and sorting of polyubiquitinated TLR3 by the ESCRT complexes. The sequence is that of Tripartite motif-containing protein 3 (Trim3) from Rattus norvegicus (Rat).